A 44-amino-acid polypeptide reads, in one-letter code: Unknown protein 1 (44 aa).

The sequence is that of Unknown protein 1 from Lonomia obliqua (Moth).